The primary structure comprises 547 residues: Chaperonin GroEL (547 aa).

ATP is bound by residues 30 to 33 (TLGP), lysine 51, 87 to 91 (DGTTT), glycine 415, and aspartate 495.

It belongs to the chaperonin (HSP60) family. Forms a cylinder of 14 subunits composed of two heptameric rings stacked back-to-back. Interacts with the co-chaperonin GroES.

Its subcellular location is the cytoplasm. The enzyme catalyses ATP + H2O + a folded polypeptide = ADP + phosphate + an unfolded polypeptide.. In terms of biological role, together with its co-chaperonin GroES, plays an essential role in assisting protein folding. The GroEL-GroES system forms a nano-cage that allows encapsulation of the non-native substrate proteins and provides a physical environment optimized to promote and accelerate protein folding. This is Chaperonin GroEL from Pasteurella multocida (strain Pm70).